Consider the following 264-residue polypeptide: Proteasome subunit beta type-5 (264 aa).

Positions 1–59 are cleaved as a propeptide — removed in mature form; that stretch reads MALASVLQRPMPVNQHGFFGLGGGADLLDLGPGSPGDGLSLAAPSWGVPEEPRIEMLHG. Catalysis depends on threonine 60, which acts as the Nucleophile. Alanine 108 contributes to the bortezomib binding site.

This sequence belongs to the peptidase T1B family. The 26S proteasome consists of a 20S proteasome core and two 19S regulatory subunits. The 20S proteasome core is a barrel-shaped complex made of 28 subunits that are arranged in four stacked rings. The two outer rings are each formed by seven alpha subunits, and the two inner rings are formed by seven beta subunits. The proteolytic activity is exerted by three beta-subunits PSMB5, PSMB6 and PSMB7. Directly interacts with POMP. Interacts with ABCB1 and TAP1. Expressed in uterus at the embryo implantation site.

The protein localises to the cytoplasm. It is found in the nucleus. It carries out the reaction Cleavage of peptide bonds with very broad specificity.. In terms of biological role, component of the 20S core proteasome complex involved in the proteolytic degradation of most intracellular proteins. This complex plays numerous essential roles within the cell by associating with different regulatory particles. Associated with two 19S regulatory particles, forms the 26S proteasome and thus participates in the ATP-dependent degradation of ubiquitinated proteins. The 26S proteasome plays a key role in the maintenance of protein homeostasis by removing misfolded or damaged proteins that could impair cellular functions, and by removing proteins whose functions are no longer required. Associated with the PA200 or PA28, the 20S proteasome mediates ubiquitin-independent protein degradation. This type of proteolysis is required in several pathways including spermatogenesis (20S-PA200 complex) or generation of a subset of MHC class I-presented antigenic peptides (20S-PA28 complex). Within the 20S core complex, PSMB5 displays a chymotrypsin-like activity. The polypeptide is Proteasome subunit beta type-5 (Psmb5) (Mus musculus (Mouse)).